The chain runs to 523 residues: Cytochrome P450 monooxygenase ple1 (523 aa).

Residues 9–29 (ALPVLAIWAAIGLAYWIDSQK) form a helical membrane-spanning segment. N-linked (GlcNAc...) asparagine glycosylation occurs at Asn-141. Cys-444 contacts heme.

Belongs to the cytochrome P450 family. Heme serves as cofactor.

Its subcellular location is the membrane. Its pathway is secondary metabolite biosynthesis; terpenoid biosynthesis. Functionally, cytochrome P450 monooxygenase; part of the gene cluster that mediates the biosynthesis of pleuromutilin, a tricyclic diterpene showing antibacterial properties. The geranylgeranyl diphosphate (GGPP) synthase ple4 catalyzes the first step in pleuromutilin biosynthesis. GGPP is then substrate of the premutilin synthase (PS) ple3 to yield premutilin. Premutilin synthase is a bifunctional enzyme composed of the fusion of a class II diterpene cyclase (DTC) and a class I diterpene synthase (DTS), with the corresponding domains and active sites containing characteristic aspartate-rich motifs. GGPP is first converted to mutildienyl-diphosphate (MPP) at the class II DTC site. MPP is subsequently further cyclized at the class I DTS site, followed by a 1,5-hydride shift and addition of water prior to terminating deprotonation, to yield premutilin. The cytochrome P450 monooxygenases ple5 and ple6 hydroxylate premutilin at C-11 and C-3, respectively, producing 11-hydroxypremutilin and 3-hydroxypremutilin. The combination of the actions of both ple5 and ple6 leads to the production of 3,11-dihydroxypremutilin. The short chain dehydrogenase ple7 further converts 3,11-dihydroxypremutilin into mutilin. The acetyltransferase ple2 then acetylates mutilin to produce 14-O-acetylmutilin. Finally, the cytochrome P450 monooxygenase ple1 catalyzes hydroxylation on the alpha position of the acetyl side chain of 14-O-acetylmutilin to yield pleuromutilin. This Rhodocybe pseudopiperita (Clitopilus pseudopiperitus) protein is Cytochrome P450 monooxygenase ple1.